We begin with the raw amino-acid sequence, 160 residues long: MSDSPTTAHTRLELPIDIIKIQALLPHRYPFLLVDRILELDQKQKRIVAQKNVSINEPFFQGHFPEHPVMPGVLIIEALAQAGGVMTQLNLSHNGHSSLLFYMVRVDNARFNKQVVPGDILILDMTMKRRIRNMGCYYGEARVNGEVVACADIMCAGVKS.

Residue histidine 63 is part of the active site.

Belongs to the thioester dehydratase family. FabZ subfamily.

The protein resides in the cytoplasm. The catalysed reaction is a (3R)-hydroxyacyl-[ACP] = a (2E)-enoyl-[ACP] + H2O. Involved in unsaturated fatty acids biosynthesis. Catalyzes the dehydration of short chain beta-hydroxyacyl-ACPs and long chain saturated and unsaturated beta-hydroxyacyl-ACPs. The chain is 3-hydroxyacyl-[acyl-carrier-protein] dehydratase FabZ from Xylella fastidiosa (strain 9a5c).